Consider the following 89-residue polypeptide: Small ribosomal subunit protein uS14B (89 aa).

The disordered stretch occupies residues 38-61 (KLPKDAHPSRLKLRDQTDGRPRGY). The segment covering 39–58 (LPKDAHPSRLKLRDQTDGRP) has biased composition (basic and acidic residues).

This sequence belongs to the universal ribosomal protein uS14 family. As to quaternary structure, part of the 30S ribosomal subunit. Contacts proteins S3 and S10.

In terms of biological role, binds 16S rRNA, required for the assembly of 30S particles and may also be responsible for determining the conformation of the 16S rRNA at the A site. The polypeptide is Small ribosomal subunit protein uS14B (Enterococcus faecalis (strain ATCC 700802 / V583)).